The following is a 500-amino-acid chain: Glycerol kinase (500 aa).

An ADP-binding site is contributed by T17. Positions 17, 18, and 19 each coordinate ATP. T17 is a sn-glycerol 3-phosphate binding site. R21 contributes to the ADP binding site. Sn-glycerol 3-phosphate contacts are provided by R87, E88, Y139, and D243. Residues R87, E88, Y139, D243, and Q244 each coordinate glycerol. Residues T265 and G308 each contribute to the ADP site. 4 residues coordinate ATP: T265, G308, Q312, and G409. G409 and N413 together coordinate ADP.

The protein belongs to the FGGY kinase family.

It carries out the reaction glycerol + ATP = sn-glycerol 3-phosphate + ADP + H(+). The protein operates within polyol metabolism; glycerol degradation via glycerol kinase pathway; sn-glycerol 3-phosphate from glycerol: step 1/1. Its activity is regulated as follows. Inhibited by fructose 1,6-bisphosphate (FBP). Its function is as follows. Key enzyme in the regulation of glycerol uptake and metabolism. Catalyzes the phosphorylation of glycerol to yield sn-glycerol 3-phosphate. The sequence is that of Glycerol kinase from Pseudomonas fluorescens (strain Pf0-1).